Consider the following 100-residue polypeptide: uncharacterized protein (100 aa).

It to M.jannaschii MJ1155.1.

This is an uncharacterized protein from Archaeoglobus fulgidus (strain ATCC 49558 / DSM 4304 / JCM 9628 / NBRC 100126 / VC-16).